Reading from the N-terminus, the 178-residue chain is Mediator of RNA polymerase II transcription subunit 28 (178 aa).

The segment at 1 to 44 is disordered; it reads MAAPLGGMFSGQPPGPPQAPPGLPGQASLLQAAPGAPRPSSSTL. Residues 13-23 are compositionally biased toward pro residues; it reads PPGPPQAPPGL. Residues 109-145 are a coiled coil; sequence QVIKEDVSELRNELQRKDALVQKHLTKLRHWQQVLED.

It belongs to the Mediator complex subunit 28 family. As to quaternary structure, component of the Mediator complex, which is composed of MED1, MED4, MED6, MED7, MED8, MED9, MED10, MED11, MED12, MED13, MED13L, MED14, MED15, MED16, MED17, MED18, MED19, MED20, MED21, MED22, MED23, MED24, MED25, MED26, MED27, MED29, MED30, MED31, CCNC, CDK8 and CDC2L6/CDK11. The MED12, MED13, CCNC and CDK8 subunits form a distinct module termed the CDK8 module. Mediator containing the CDK8 module is less active than Mediator lacking this module in supporting transcriptional activation. Individual preparations of the Mediator complex lacking one or more distinct subunits have been variously termed ARC, CRSP, DRIP, PC2, SMCC and TRAP. Forms a ternary complex with NF2/merlin and GRB2. Binds to actin. Widely expressed. Highly expressed in vascular tissues such as placenta, testis and liver.

The protein resides in the nucleus. Its subcellular location is the cytoplasm. It is found in the membrane. Component of the Mediator complex, a coactivator involved in the regulated transcription of nearly all RNA polymerase II-dependent genes. Mediator functions as a bridge to convey information from gene-specific regulatory proteins to the basal RNA polymerase II transcription machinery. Mediator is recruited to promoters by direct interactions with regulatory proteins and serves as a scaffold for the assembly of a functional preinitiation complex with RNA polymerase II and the general transcription factors. May be part of a complex containing NF2/merlin that participates in cellular signaling to the actin cytoskeleton downstream of tyrosine kinase signaling pathways. This is Mediator of RNA polymerase II transcription subunit 28 (MED28) from Homo sapiens (Human).